We begin with the raw amino-acid sequence, 108 residues long: UPF0102 protein WS0451 (108 aa).

Belongs to the UPF0102 family.

In Wolinella succinogenes (strain ATCC 29543 / DSM 1740 / CCUG 13145 / JCM 31913 / LMG 7466 / NCTC 11488 / FDC 602W) (Vibrio succinogenes), this protein is UPF0102 protein WS0451.